Consider the following 1178-residue polypeptide: Pyruvate carboxylase, mitochondrial (1178 aa).

The N-terminal 20 residues, 1–20 (MLKFRTVHGGLRLLGIRRTS), are a transit peptide targeting the mitochondrion. N6-acetyllysine is present on residues K35 and K39. One can recognise a Biotin carboxylation domain in the interval 36 to 486 (PIKKVMVANR…DTQFIDENPE (451 aa)). Residue K79 is modified to N6-acetyllysine; alternate. K79 is modified (N6-succinyllysine; alternate). N6-acetyllysine is present on residues K148 and K152. Residues K152 and E236 each coordinate ATP. An ATP-grasp domain is found at 156–353 (RAIAIAAGVP…LVHAQIHVAE (198 aa)). K241 is modified (N6-acetyllysine). ATP is bound at residue H271. N6-acetyllysine occurs at positions 297 and 319. Residue R328 is part of the active site. Residue K434 is modified to N6-acetyllysine. The residue at position 442 (K442) is an N6-succinyllysine. Residues 563-832 (LLLMDTTFRD…DTEVPMERVF (270 aa)) form the Pyruvate carboxyltransferase domain. A substrate-binding site is contributed by 571–575 (RDAHQ). D572 serves as a coordination point for Mn(2+). An N6-acetyllysine modification is found at K589. R644 provides a ligand contact to substrate. N6-acetyllysine occurs at positions 661 and 717. K741 contacts Mn(2+). Position 741 is an N6-carboxylysine (K741). At K748 the chain carries N6-acetyllysine. Residues H771 and H773 each coordinate Mn(2+). The residue at position 892 (K892) is an N6-acetyllysine. Residue T908 coordinates substrate. N6-acetyllysine occurs at positions 969 and 992. T1003 bears the Phosphothreonine mark. Residues K1061, K1090, and K1124 each carry the N6-acetyllysine modification. A Biotinyl-binding domain is found at 1109–1178 (KGQIGAPMPG…EGDDLILEIE (70 aa)). At K1144 the chain carries N6-biotinyllysine.

Homotetramer. Interacts (via the biotin carboxylation domain) with SIRT4. It depends on biotin as a cofactor. Mn(2+) is required as a cofactor. Post-translationally, acetylation of Lys-748 might play a role in catalytic activity regulation.

Its subcellular location is the mitochondrion matrix. It carries out the reaction hydrogencarbonate + pyruvate + ATP = oxaloacetate + ADP + phosphate + H(+). The protein operates within carbohydrate biosynthesis; gluconeogenesis. Its function is as follows. Pyruvate carboxylase catalyzes a 2-step reaction, involving the ATP-dependent carboxylation of the covalently attached biotin in the first step and the transfer of the carboxyl group to pyruvate in the second. Catalyzes in a tissue specific manner, the initial reactions of glucose (liver, kidney) and lipid (adipose tissue, liver, brain) synthesis from pyruvate. The protein is Pyruvate carboxylase, mitochondrial of Homo sapiens (Human).